We begin with the raw amino-acid sequence, 275 residues long: Type III pantothenate kinase (275 aa).

Residue 6 to 13 (DAGNTNIV) participates in ATP binding. A substrate-binding site is contributed by 108-111 (GADR). D110 serves as the catalytic Proton acceptor. Position 130 (D130) interacts with K(+). An ATP-binding site is contributed by T133. T187 provides a ligand contact to substrate.

This sequence belongs to the type III pantothenate kinase family. Homodimer. Requires NH4(+) as cofactor. It depends on K(+) as a cofactor.

The protein localises to the cytoplasm. It carries out the reaction (R)-pantothenate + ATP = (R)-4'-phosphopantothenate + ADP + H(+). It functions in the pathway cofactor biosynthesis; coenzyme A biosynthesis; CoA from (R)-pantothenate: step 1/5. Its function is as follows. Catalyzes the phosphorylation of pantothenate (Pan), the first step in CoA biosynthesis. This Zymomonas mobilis subsp. mobilis (strain ATCC 31821 / ZM4 / CP4) protein is Type III pantothenate kinase.